The sequence spans 445 residues: Probable fructoselysine/psicoselysine transporter FrlA (445 aa).

The next 12 membrane-spanning stretches (helical) occupy residues 10-30, 38-58, 93-113, 121-141, 155-175, 181-201, 236-256, 273-293, 334-354, 355-375, 389-410, and 417-435; these read LGFW…GIFV, AAGT…IVIP, GWAS…LAIV, PIDP…FMLL, LITI…IFWF, AAPT…LAGI, CLLV…LMPF, IPAL…IVIL, IILQ…TSLL, GYFT…IIWC, AFGL…STFV, and LICA…AFWA.

Belongs to the amino acid-polyamine-organocation (APC) superfamily.

It localises to the cell inner membrane. It carries out the reaction N(6)-(D-fructosyl)-L-lysine(in) = N(6)-(D-fructosyl)-L-lysine(out). The catalysed reaction is N(6)-(D-psicosyl)-L-lysine(in) = N(6)-(D-psicosyl)-L-lysine(out). It participates in carbohydrate metabolism; fructoselysine degradation. In terms of biological role, is likely involved in the transport of fructoselysine and psicoselysine to the cytoplasm, where they are degraded. The sequence is that of Probable fructoselysine/psicoselysine transporter FrlA from Escherichia coli (strain K12).